A 1212-amino-acid chain; its full sequence is uncharacterized protein (1212 aa).

Residues 783–802 are disordered; that stretch reads TRQDASGGSSSGTKKGEKLQ.

This is an uncharacterized protein from Human herpesvirus 6B (strain Z29) (HHV-6 variant B).